A 35-amino-acid polypeptide reads, in one-letter code: uncharacterized protein (35 aa).

This is an uncharacterized protein from Haloarcula hispanica (His1V).